The following is a 371-amino-acid chain: Macronuclear solute carrier homolog CR-MSC (371 aa).

Solcar repeat units lie at residues Arg-16–Lys-111, Ala-120–Asn-208, and Pro-215–Phe-304. Transmembrane regions (helical) follow at residues Phe-22 to Val-42, Thr-89 to Tyr-109, Val-126 to Val-146, Ala-184 to Trp-204, Leu-221 to Ile-241, and Phe-281 to Leu-301.

It belongs to the mitochondrial carrier (TC 2.A.29) family.

The protein resides in the membrane. In Oxytricha trifallax (Sterkiella histriomuscorum), this protein is Macronuclear solute carrier homolog CR-MSC.